The primary structure comprises 350 residues: Phenylalanine--tRNA ligase alpha subunit (350 aa).

Glu-257 lines the Mg(2+) pocket.

Belongs to the class-II aminoacyl-tRNA synthetase family. Phe-tRNA synthetase alpha subunit type 1 subfamily. Tetramer of two alpha and two beta subunits. Requires Mg(2+) as cofactor.

It localises to the cytoplasm. The enzyme catalyses tRNA(Phe) + L-phenylalanine + ATP = L-phenylalanyl-tRNA(Phe) + AMP + diphosphate + H(+). The protein is Phenylalanine--tRNA ligase alpha subunit of Listeria monocytogenes serotype 4b (strain CLIP80459).